Here is a 174-residue protein sequence, read N- to C-terminus: Co-chaperone protein HscB homolog (174 aa).

In terms of domain architecture, J spans 2–74; the sequence is NYFELFKFPP…IRRAEHMLSL (73 aa).

Belongs to the HscB family. As to quaternary structure, interacts with HscA and stimulates its ATPase activity.

Its function is as follows. Co-chaperone involved in the maturation of iron-sulfur cluster-containing proteins. Seems to help targeting proteins to be folded toward HscA. The polypeptide is Co-chaperone protein HscB homolog (Shewanella oneidensis (strain ATCC 700550 / JCM 31522 / CIP 106686 / LMG 19005 / NCIMB 14063 / MR-1)).